An 82-amino-acid polypeptide reads, in one-letter code: Putative defensin-like protein 134 (82 aa).

The N-terminal stretch at 1–26 (MEVRSLNLCFLLVLVLLMSPAPTAVA) is a signal peptide. 4 disulfides stabilise this stretch: Cys32–Cys79, Cys42–Cys68, Cys47–Cys74, and Cys51–Cys76.

This sequence belongs to the DEFL family.

It is found in the secreted. In Arabidopsis thaliana (Mouse-ear cress), this protein is Putative defensin-like protein 134.